Here is a 285-residue protein sequence, read N- to C-terminus: Release factor glutamine methyltransferase (285 aa).

S-adenosyl-L-methionine contacts are provided by residues 124 to 128 (GTGSG), Asp147, and Asn190. A substrate-binding site is contributed by 190 to 193 (NPPY).

This sequence belongs to the protein N5-glutamine methyltransferase family. PrmC subfamily.

It catalyses the reaction L-glutaminyl-[peptide chain release factor] + S-adenosyl-L-methionine = N(5)-methyl-L-glutaminyl-[peptide chain release factor] + S-adenosyl-L-homocysteine + H(+). Methylates the class 1 translation termination release factors RF1/PrfA and RF2/PrfB on the glutamine residue of the universally conserved GGQ motif. The polypeptide is Release factor glutamine methyltransferase (Flavobacterium psychrophilum (strain ATCC 49511 / DSM 21280 / CIP 103535 / JIP02/86)).